Here is a 299-residue protein sequence, read N- to C-terminus: Oxygen-dependent coproporphyrinogen-III oxidase (299 aa).

Serine 92 is a substrate binding site. The a divalent metal cation site is built by histidine 96 and histidine 106. Histidine 106 (proton donor) is an active-site residue. Residue 108-110 (NVR) participates in substrate binding. Histidine 145 and histidine 175 together coordinate a divalent metal cation. The tract at residues 240-275 (YVEFNLVWDRGTLFGLQTGGRTESILMSMPPLVRWE) is important for dimerization. 258–260 (GGR) serves as a coordination point for substrate.

This sequence belongs to the aerobic coproporphyrinogen-III oxidase family. Homodimer. A divalent metal cation serves as cofactor.

Its subcellular location is the cytoplasm. It catalyses the reaction coproporphyrinogen III + O2 + 2 H(+) = protoporphyrinogen IX + 2 CO2 + 2 H2O. It functions in the pathway porphyrin-containing compound metabolism; protoporphyrin-IX biosynthesis; protoporphyrinogen-IX from coproporphyrinogen-III (O2 route): step 1/1. Functionally, involved in the heme biosynthesis. Catalyzes the aerobic oxidative decarboxylation of propionate groups of rings A and B of coproporphyrinogen-III to yield the vinyl groups in protoporphyrinogen-IX. The chain is Oxygen-dependent coproporphyrinogen-III oxidase from Enterobacter sp. (strain 638).